The chain runs to 1007 residues: Lysosomal alpha-mannosidase (1007 aa).

A signal peptide spans 1-47; that stretch reads MGASVLPLGLGAGDCQSSSGRRMSACLPRTALSFLLSLLLATPGARA. 2 disulfide bridges follow: C53–C356 and C266–C271. H70 and D72 together coordinate Zn(2+). N131 carries N-linked (GlcNAc...) asparagine glycosylation. D194 is a binding site for Zn(2+). Catalysis depends on D194, which acts as the Nucleophile. Residues N308, N343, and N365 are each glycosylated (N-linked (GlcNAc...) asparagine). Disulfide bonds link C410–C470 and C491–C499. H444 provides a ligand contact to Zn(2+). N495, N540, N639, N686, N760, and N927 each carry an N-linked (GlcNAc...) asparagine glycan.

The protein belongs to the glycosyl hydrolase 38 family. It depends on Zn(2+) as a cofactor.

The protein resides in the lysosome. It catalyses the reaction Hydrolysis of terminal, non-reducing alpha-D-mannose residues in alpha-D-mannosides.. Its function is as follows. Necessary for the catabolism of N-linked carbohydrates released during glycoprotein turnover. In Cavia porcellus (Guinea pig), this protein is Lysosomal alpha-mannosidase (MAN2B1).